We begin with the raw amino-acid sequence, 373 residues long: Cystathionine gamma-synthase/O-acetylhomoserine (thiol)-lyase (373 aa).

An N6-(pyridoxal phosphate)lysine modification is found at Lys-197.

It belongs to the trans-sulfuration enzymes family. Homotetramer. Pyridoxal 5'-phosphate serves as cofactor.

It localises to the cytoplasm. The catalysed reaction is O-acetyl-L-homoserine + L-cysteine = L,L-cystathionine + acetate + H(+). It carries out the reaction O-acetyl-L-homoserine + hydrogen sulfide = L-homocysteine + acetate. Its pathway is amino-acid biosynthesis; L-methionine biosynthesis via de novo pathway. Catalyzes the formation of L-cystathionine from O-acetyl-L-homoserine and L-cysteine. Cannot use O-succinyl-L-homoserine as substrate. Also exhibits O-acetylhomoserine thiolyase activity, catalyzing the synthesis of L-homocysteine from O-acetyl-L-homoserine and sulfide. The sequence is that of Cystathionine gamma-synthase/O-acetylhomoserine (thiol)-lyase (metI) from Bacillus subtilis (strain 168).